Reading from the N-terminus, the 199-residue chain is 3-isopropylmalate dehydratase small subunit (199 aa).

Belongs to the LeuD family. LeuD type 1 subfamily. Heterodimer of LeuC and LeuD.

The enzyme catalyses (2R,3S)-3-isopropylmalate = (2S)-2-isopropylmalate. It participates in amino-acid biosynthesis; L-leucine biosynthesis; L-leucine from 3-methyl-2-oxobutanoate: step 2/4. In terms of biological role, catalyzes the isomerization between 2-isopropylmalate and 3-isopropylmalate, via the formation of 2-isopropylmaleate. In Leifsonia xyli subsp. xyli (strain CTCB07), this protein is 3-isopropylmalate dehydratase small subunit.